Consider the following 118-residue polypeptide: Aspartate 1-decarboxylase (118 aa).

Residue Ser-25 is the Schiff-base intermediate with substrate; via pyruvic acid of the active site. Ser-25 carries the post-translational modification Pyruvic acid (Ser). Substrate is bound at residue Thr-57. Tyr-58 acts as the Proton donor in catalysis. 73 to 75 provides a ligand contact to substrate; the sequence is GAA.

It belongs to the PanD family. Heterooctamer of four alpha and four beta subunits. Pyruvate serves as cofactor. Is synthesized initially as an inactive proenzyme, which is activated by self-cleavage at a specific serine bond to produce a beta-subunit with a hydroxyl group at its C-terminus and an alpha-subunit with a pyruvoyl group at its N-terminus.

Its subcellular location is the cytoplasm. The enzyme catalyses L-aspartate + H(+) = beta-alanine + CO2. It functions in the pathway cofactor biosynthesis; (R)-pantothenate biosynthesis; beta-alanine from L-aspartate: step 1/1. In terms of biological role, catalyzes the pyruvoyl-dependent decarboxylation of aspartate to produce beta-alanine. This chain is Aspartate 1-decarboxylase, found in Porphyromonas gingivalis (strain ATCC 33277 / DSM 20709 / CIP 103683 / JCM 12257 / NCTC 11834 / 2561).